Here is a 111-residue protein sequence, read N- to C-terminus: Nucleoid-associated protein SynRCC307_0025 (111 aa).

Belongs to the YbaB/EbfC family. As to quaternary structure, homodimer.

The protein localises to the cytoplasm. It is found in the nucleoid. Functionally, binds to DNA and alters its conformation. May be involved in regulation of gene expression, nucleoid organization and DNA protection. This chain is Nucleoid-associated protein SynRCC307_0025, found in Synechococcus sp. (strain RCC307).